A 624-amino-acid polypeptide reads, in one-letter code: MAIRSSGRKLSFEILSQNSSFENDDTSIRRSSSDPITGNVASESPRDYGKRKRSKKKKKKVNQVETILENGDSHSTIITGSSGDFGETTTMFENRLNYYGGGGSGSSGGGCVVTLLDGQTVHHNGFNFGELRQRNVNGSVDGSNDERWSDTLSSDKKLYMEETSVELSPSENPPFQEVQHQFPRSEINGNVVRRLDTEASLDWKQLVADDPDFLSAETRSPMKYFMEEIYGGISLRSTTTPGNDIERERIYDTIFRLPWRCEVLIDTGFFVCVNSFLSLLTVMPIRVLLIFMDAFKNRQFRRPSASELSDLACFLVLATGTILLGRTDISLIYHMIRGQSTIKLYVVYNILEIFDRLCQSFCGDVFGALFSSAKGLSISPPEKLRFSTWRFVSDLALTMAASILHSFILLAQAITLSTCIVAHNNALLALLVSNNFAEIKSSVFKRFSKDNIHGLVYADSIERFHISAFLVSVLAQNILESEGAWFGNFIYNATTVFFCEMMIDIIKHSFLAKFNDIKPIAYSEFLQALCEQTLNIRPEDRKTNLTFVPLAPACVVIRVLTPVYAAHLPYSPLPWRMLWMVILFVITYIMLTSLKVLIGMGLRKHATWYINRCRRRNSSHLHND.

A disordered region spans residues 20-63; the sequence is SFENDDTSIRRSSSDPITGNVASESPRDYGKRKRSKKKKKKVNQ. Over residues 33 to 42 the composition is skewed to polar residues; the sequence is SDPITGNVAS. The span at 49–61 shows a compositional bias: basic residues; the sequence is GKRKRSKKKKKKV. Helical transmembrane passes span 263–283, 305–325, 391–411, 413–433, 545–565, and 578–598; these read VLIDTGFFVCVNSFLSLLTVM, ASELSDLACFLVLATGTILLG, FVSDLALTMAASILHSFILLA, AITLSTCIVAHNNALLALLVS, LTFVPLAPACVVIRVLTPVYA, and LWMVILFVITYIMLTSLKVLI.

Belongs to the TAPT1 family. Interacts with CRT3, but not with CRT1 or CNX. In terms of tissue distribution, expressed in inflorescences, siliques, roots and shoots. Expressed in early embryo, endosperm, mature pollen and pollen tubes, synergide cells and weakly in antipodal cells.

The protein localises to the membrane. It localises to the endoplasmic reticulum lumen. In terms of biological role, probable component of the calreticulin 3 (CRT3) complex, acting probably as a co-chaperone involved in protein retention in the endoplasmic reticulum lumen. Required for micropylar pollen tube guidance. Plays an essential role in cell plate orientation or positioning in early embryo patterning. The protein is Protein POLLEN DEFECTIVE IN GUIDANCE 1 (POD1) of Arabidopsis thaliana (Mouse-ear cress).